Reading from the N-terminus, the 303-residue chain is UDP-3-O-acyl-N-acetylglucosamine deacetylase (303 aa).

Zn(2+)-binding residues include H78, H237, and D241. Catalysis depends on H264, which acts as the Proton donor.

It belongs to the LpxC family. Zn(2+) serves as cofactor.

It carries out the reaction a UDP-3-O-[(3R)-3-hydroxyacyl]-N-acetyl-alpha-D-glucosamine + H2O = a UDP-3-O-[(3R)-3-hydroxyacyl]-alpha-D-glucosamine + acetate. It functions in the pathway glycolipid biosynthesis; lipid IV(A) biosynthesis; lipid IV(A) from (3R)-3-hydroxytetradecanoyl-[acyl-carrier-protein] and UDP-N-acetyl-alpha-D-glucosamine: step 2/6. Its function is as follows. Catalyzes the hydrolysis of UDP-3-O-myristoyl-N-acetylglucosamine to form UDP-3-O-myristoylglucosamine and acetate, the committed step in lipid A biosynthesis. The protein is UDP-3-O-acyl-N-acetylglucosamine deacetylase of Pseudomonas syringae pv. tomato (strain ATCC BAA-871 / DC3000).